Here is a 631-residue protein sequence, read N- to C-terminus: Squalene--hopene cyclase (631 aa).

PFTB repeat units follow at residues 15 to 56 (LDRA…LDRV), 61 to 102 (MEKI…KYIG), and 241 to 282 (EIRA…QHPA). The active-site Proton donor is the aspartate 376. PFTB repeat units follow at residues 400–441 (MTKG…GEVT), 468–508 (IRRA…KAVG), 516–557 (IQKA…SQTA), and 574–622 (ARRG…LALG).

The protein belongs to the terpene cyclase/mutase family. In terms of assembly, homodimer.

The protein localises to the cell membrane. It carries out the reaction squalene = hop-22(29)-ene. It catalyses the reaction squalene + H2O = hopan-22-ol. It functions in the pathway secondary metabolite biosynthesis; hopanoid biosynthesis. In terms of biological role, catalyzes the cyclization of squalene to two pentacyclic triterpenes, hop-22(29)-ene and hopan-22-ol (diplopterol); hopene and hopanol are formed at a constant ratio of 5:1. Is a key enzyme of hopanoid biosynthesis; hopanoids are components of the bacterial cytoplasmic membranes that play a vital role in stabilizing the membranes. In Alicyclobacillus acidocaldarius subsp. acidocaldarius (strain ATCC 27009 / DSM 446 / BCRC 14685 / JCM 5260 / KCTC 1825 / NBRC 15652 / NCIMB 11725 / NRRL B-14509 / 104-IA) (Bacillus acidocaldarius), this protein is Squalene--hopene cyclase (shc).